Reading from the N-terminus, the 139-residue chain is ATP synthase epsilon chain (139 aa).

It belongs to the ATPase epsilon chain family. F-type ATPases have 2 components, CF(1) - the catalytic core - and CF(0) - the membrane proton channel. CF(1) has five subunits: alpha(3), beta(3), gamma(1), delta(1), epsilon(1). CF(0) has three main subunits: a, b and c.

Its subcellular location is the cell inner membrane. Produces ATP from ADP in the presence of a proton gradient across the membrane. In Pseudomonas putida (strain W619), this protein is ATP synthase epsilon chain.